Reading from the N-terminus, the 46-residue chain is Defensin-like protein 2 (46 aa).

Cystine bridges form between Cys-3–Cys-46, Cys-13–Cys-33, Cys-19–Cys-40, and Cys-23–Cys-42.

Monomer. As to expression, present in seeds, cotyledons and leaves. Not found in roots or stems.

Has antibacterial activity against the Gram-positive bacterium S.aureus and the Gram-negative bacteria E.coli and P.syringae. Does not have antibacterial activity against the phytopathogenic bacteria R.solanacearum, Rhataybacter sp and Erwinia sp. Does not inhibit trypsin, chymotrypsin or alpha-amylases. The protein is Defensin-like protein 2 of Vigna unguiculata (Cowpea).